The primary structure comprises 596 residues: Succinate dehydrogenase flavoprotein subunit (596 aa).

FAD is bound by residues 18 to 23, 41 to 56, and aspartate 225; these read GAGGAG and SKLF…AQGG. Residue histidine 49 is modified to Tele-8alpha-FAD histidine. Residues histidine 246 and threonine 258 each contribute to the substrate site. Catalysis depends on arginine 290, which acts as the Proton acceptor. Histidine 357 is a substrate binding site. Glutamate 391 is an FAD binding site. Arginine 402 lines the substrate pocket. 407–408 is an FAD binding site; it reads SL.

The protein belongs to the FAD-dependent oxidoreductase 2 family. FRD/SDH subfamily. As to quaternary structure, part of an enzyme complex containing four subunits: a flavoprotein, an iron-sulfur, cytochrome b-556, and a hydrophobic anchor protein. It depends on FAD as a cofactor.

It localises to the cell inner membrane. It catalyses the reaction a quinone + succinate = fumarate + a quinol. It functions in the pathway carbohydrate metabolism; tricarboxylic acid cycle; fumarate from succinate (bacterial route): step 1/1. The polypeptide is Succinate dehydrogenase flavoprotein subunit (sdhA) (Rickettsia bellii (strain RML369-C)).